The primary structure comprises 292 residues: MPELPEVETVRRGLEQKLNNFIIKKVEVCRDSTVAYPSNKEEFIKGLKNSLIYKWDRRGKYLIAQLKEVQNENTEFPLENSQNNGFLVVHLRMTGYFKFIENSTHPCKHTRIRFFDKNNNELRYVDVRSFGQMWWINKDLSINKVIKGLGSLGPEPFSKDFNANYLKEAISKRTKSIKAILLDQTIVAGIGNIYADESLYSAGISPFREARTIKKNELIKLKKSIVIVLKKSIGSGGTTFSDFRDLEGENGNFGLQTNVYRRTGRECRKCGNLIERQKITGRSTHWCPNCQK.

Pro2 serves as the catalytic Schiff-base intermediate with DNA. The Proton donor role is filled by Glu3. Residue Lys60 is the Proton donor; for beta-elimination activity of the active site. DNA-binding residues include His109, Arg128, and Arg173. Residues 258–292 (NVYRRTGRECRKCGNLIERQKITGRSTHWCPNCQK) form an FPG-type zinc finger. The Proton donor; for delta-elimination activity role is filled by Arg282.

This sequence belongs to the FPG family. Monomer. Zn(2+) serves as cofactor.

The catalysed reaction is Hydrolysis of DNA containing ring-opened 7-methylguanine residues, releasing 2,6-diamino-4-hydroxy-5-(N-methyl)formamidopyrimidine.. The enzyme catalyses 2'-deoxyribonucleotide-(2'-deoxyribose 5'-phosphate)-2'-deoxyribonucleotide-DNA = a 3'-end 2'-deoxyribonucleotide-(2,3-dehydro-2,3-deoxyribose 5'-phosphate)-DNA + a 5'-end 5'-phospho-2'-deoxyribonucleoside-DNA + H(+). Involved in base excision repair of DNA damaged by oxidation or by mutagenic agents. Acts as a DNA glycosylase that recognizes and removes damaged bases. Has a preference for oxidized purines, such as 7,8-dihydro-8-oxoguanine (8-oxoG). Has AP (apurinic/apyrimidinic) lyase activity and introduces nicks in the DNA strand. Cleaves the DNA backbone by beta-delta elimination to generate a single-strand break at the site of the removed base with both 3'- and 5'-phosphates. This chain is Formamidopyrimidine-DNA glycosylase, found in Prochlorococcus marinus (strain MIT 9301).